The following is a 410-amino-acid chain: WD repeat-containing protein jip5 (410 aa).

WD repeat units follow at residues proline 9 to histidine 48, arginine 74 to lysine 113, alanine 119 to alanine 160, valine 223 to glutamate 264, glycine 273 to glutamate 316, and aspartate 320 to glutamate 357. The interval proline 41 to histidine 65 is disordered. The segment covering glutamate 43–glutamine 53 has biased composition (acidic residues). The interval isoleucine 354–aspartate 410 is disordered. The span at aspartate 364–aspartate 376 shows a compositional bias: acidic residues. Over residues histidine 377–arginine 386 the composition is skewed to basic and acidic residues.

The protein belongs to the WD repeat WDR55 family.

Its subcellular location is the nucleus. The protein resides in the nucleolus. This chain is WD repeat-containing protein jip5 (jip5), found in Emericella nidulans (strain FGSC A4 / ATCC 38163 / CBS 112.46 / NRRL 194 / M139) (Aspergillus nidulans).